We begin with the raw amino-acid sequence, 391 residues long: Multidrug resistance protein MdtL (391 aa).

12 consecutive transmembrane segments (helical) span residues 4 to 24 (FLICSFALVLLYPAGIDMYLV), 42 to 62 (IAFSVYLAGMAAAMLFAGKVA), 69 to 89 (PVAIPGAALFIIASVFCSLAE), 93 to 113 (LFLAGRFLQGLGAGCCYVVAF), 131 to 151 (LLNGITCIIPVLAPVLGHLIM), 158 to 178 (SLFWTMATMGIAVLMLSLFIL), 203 to 222 (FFLSRVVITTLSVSVILTFV), 245 to 265 (ALTAGVSMTVSFSTPFALGIF), 269 to 289 (TLMITSQVLFLAAGITLAVSP), 293 to 313 (VSLFGITLICAGFSVGFGVAM), 331 to 351 (LGIAQVCGSSLWIWLAAVVGI), and 356 to 376 (MLIGILIACSIVSLLLIMFVA).

It belongs to the major facilitator superfamily. DHA1 family. MdtL (TC 2.A.1.2.22) subfamily.

It localises to the cell inner membrane. Functionally, confers resistance to chloramphenicol. This chain is Multidrug resistance protein MdtL, found in Escherichia coli O17:K52:H18 (strain UMN026 / ExPEC).